The sequence spans 1529 residues: DNA (cytosine-5)-methyltransferase 1B (1529 aa).

Disordered regions lie at residues 1 to 56 (MVKS…RAAC) and 674 to 706 (DDELEENEDEDAEEEAQIEEENVSKTPPSTRSR). A compositionally biased stretch (basic and acidic residues) spans 21–35 (QKKDEDTTDKGKLDE). The span at 674 to 694 (DDELEENEDEDAEEEAQIEEE) shows a compositional bias: acidic residues. The segment covering 697-706 (SKTPPSTRSR) has biased composition (polar residues). 2 BAH domains span residues 741 to 873 (LRIN…FSLP) and 910 to 1049 (ITYN…KQLP). Residues 1093 to 1527 (LATLDIFAGC…RKLKEAVDAK (435 aa)) enclose the SAM-dependent MTase C5-type domain. The active site involves Cys-1198.

Belongs to the class I-like SAM-binding methyltransferase superfamily. C5-methyltransferase family. Expressed in roots and inflorescences. Expressed in roots, panicles, anthers, pistils, endosperm and imbibed embryos. Expressed in tissues containing actively replicating and dividing cells, such as shoot and root meristems.

It localises to the nucleus. The catalysed reaction is a 2'-deoxycytidine in DNA + S-adenosyl-L-methionine = a 5-methyl-2'-deoxycytidine in DNA + S-adenosyl-L-homocysteine + H(+). Major CG methylase that methylates chromatin CpG residues and maintains DNA methylation. Plays a major role in genomic imprinting, regulation of embryogenesis and seed viability. Maintains DNA methylation at the FIE1 gene locus in the embryo. The chain is DNA (cytosine-5)-methyltransferase 1B (MET1B) from Oryza sativa subsp. japonica (Rice).